Reading from the N-terminus, the 488-residue chain is Kynurenine 3-monooxygenase 2 (488 aa).

Belongs to the aromatic-ring hydroxylase family. KMO subfamily. The cofactor is FAD.

It is found in the mitochondrion outer membrane. The catalysed reaction is L-kynurenine + NADPH + O2 + H(+) = 3-hydroxy-L-kynurenine + NADP(+) + H2O. Its pathway is cofactor biosynthesis; NAD(+) biosynthesis; quinolinate from L-kynurenine: step 1/3. In terms of biological role, catalyzes the hydroxylation of L-kynurenine (L-Kyn) to form 3-hydroxy-L-kynurenine (L-3OHKyn). Required for synthesis of quinolinic acid. In Aspergillus niger (strain ATCC MYA-4892 / CBS 513.88 / FGSC A1513), this protein is Kynurenine 3-monooxygenase 2 (bna4-2).